A 390-amino-acid polypeptide reads, in one-letter code: MRYITAGESHGPQLTVILEGVPAGLTLAAEHINKELLRRQKGHGRGRRMQIETDTVEIVSGVRHGMTLGSPITLIVKNDDFKHWTKVMGADPISEKESKEMKRTITKPRPGHADLNGAIKYGHRDIRNVLERSSARETTVRVAAGAVAKQILKELGVEIAGHVLEIGGVKAKHILNLSIEEIQIITENSPVRCLDKTVEQEMMDAIDNAKNSGDSIGGIVEVIAEGMPIGVGSYVHYDRKLDAKLAGAIMSINAFKGAEIGVGFEAARQPGSKVHDEILWDEEQGYTRKTNNAGGLEGGMTTGMPIVVRGVMKPIPTLYKPLASVDIDTKEAFQASIERSDSCAVPAAGVVAESVVAWELAHALVEQFGKDRMELIQQNITQHNKYAKEF.

The NADP(+) site is built by arginine 39 and arginine 45. FMN-binding positions include 132–134 (RSS), 253–254 (NA), glycine 298, 313–317 (KPIPT), and arginine 339.

Belongs to the chorismate synthase family. Homotetramer. Requires FMNH2 as cofactor.

It catalyses the reaction 5-O-(1-carboxyvinyl)-3-phosphoshikimate = chorismate + phosphate. Its pathway is metabolic intermediate biosynthesis; chorismate biosynthesis; chorismate from D-erythrose 4-phosphate and phosphoenolpyruvate: step 7/7. Functionally, catalyzes the anti-1,4-elimination of the C-3 phosphate and the C-6 proR hydrogen from 5-enolpyruvylshikimate-3-phosphate (EPSP) to yield chorismate, which is the branch point compound that serves as the starting substrate for the three terminal pathways of aromatic amino acid biosynthesis. This reaction introduces a second double bond into the aromatic ring system. In Bacillus thuringiensis (strain Al Hakam), this protein is Chorismate synthase 2.